Here is a 149-residue protein sequence, read N- to C-terminus: Large ribosomal subunit protein uL15 (149 aa).

The segment at Met-1 to Leu-58 is disordered. Gly residues-rich tracts occupy residues Arg-22–Ala-32 and Ser-43–Gly-53.

Belongs to the universal ribosomal protein uL15 family. In terms of assembly, part of the 50S ribosomal subunit.

Its function is as follows. Binds to the 23S rRNA. This Finegoldia magna (strain ATCC 29328 / DSM 20472 / WAL 2508) (Peptostreptococcus magnus) protein is Large ribosomal subunit protein uL15.